The chain runs to 555 residues: Alpha-copaene synthase (555 aa).

5 residues coordinate Mg(2+): Asp312, Asp316, Asp452, Ser456, and Glu460. The DDXXD motif motif lies at 312-316 (DDTYD).

This sequence belongs to the terpene synthase family. The cofactor is Mg(2+). In terms of tissue distribution, mainly expressed in sunflower trichomes.

It carries out the reaction (2E,6E)-farnesyl diphosphate = alpha-copaene + diphosphate. The catalysed reaction is (2E,6E)-farnesyl diphosphate = alpha-muurolene + diphosphate. It catalyses the reaction (2E,6E)-farnesyl diphosphate = alpha-humulene + diphosphate. It functions in the pathway secondary metabolite biosynthesis; terpenoid biosynthesis. Functionally, involved in the biosynthesis of germacrene-derived sesquiterpene lactones. Catalyzes the cyclization of farnesyl diphosphate to alpha-copaene, delta-cadinene, alpha-muurolene, beta-caryophyllene and alpha-humulene. The polypeptide is Alpha-copaene synthase (CS) (Helianthus annuus (Common sunflower)).